The sequence spans 880 residues: Translation initiation factor IF-2 (880 aa).

Basic and acidic residues-rich tracts occupy residues 34–43, 59–69, 82–94, 110–131, 167–181, 230–240, and 248–261; these read HMSSLDDKQV, TEKDSKNSSRK, RRRD…DNRH, NRRE…DLLN, KKVE…EKLE, QKEETKPTRKK, and EVPD…EHSD. The segment at 34–297 is disordered; sequence HMSSLDDKQV…KERPLPETLV (264 aa). Basic residues predominate over residues 262 to 275; sequence KARRRRNKKNKRIN. Basic and acidic residues predominate over residues 276-292; that stretch reads QSKEVKKQPTQRKERPL. In terms of domain architecture, tr-type G spans 381–550; sequence KRPPVVTIMG…LLQADVMELK (170 aa). A G1 region spans residues 390-397; that stretch reads GHVDHGKT. 390–397 lines the GTP pocket; that stretch reads GHVDHGKT. The segment at 415–419 is G2; sequence GITQR. The G3 stretch occupies residues 436–439; sequence DTPG. Residues 436–440 and 490–493 each bind GTP; these read DTPGH and NKID. Positions 490–493 are G4; that stretch reads NKID. The tract at residues 526 to 528 is G5; the sequence is SAK.

Belongs to the TRAFAC class translation factor GTPase superfamily. Classic translation factor GTPase family. IF-2 subfamily.

Its subcellular location is the cytoplasm. One of the essential components for the initiation of protein synthesis. Protects formylmethionyl-tRNA from spontaneous hydrolysis and promotes its binding to the 30S ribosomal subunits. Also involved in the hydrolysis of GTP during the formation of the 70S ribosomal complex. This chain is Translation initiation factor IF-2, found in Lactobacillus johnsonii (strain CNCM I-12250 / La1 / NCC 533).